The following is a 514-amino-acid chain: Proline--tRNA ligase (514 aa).

This sequence belongs to the class-II aminoacyl-tRNA synthetase family. ProS type 3 subfamily. As to quaternary structure, homodimer.

It localises to the cytoplasm. It carries out the reaction tRNA(Pro) + L-proline + ATP = L-prolyl-tRNA(Pro) + AMP + diphosphate. Its function is as follows. Catalyzes the attachment of proline to tRNA(Pro) in a two-step reaction: proline is first activated by ATP to form Pro-AMP and then transferred to the acceptor end of tRNA(Pro). This Erythrobacter litoralis (strain HTCC2594) protein is Proline--tRNA ligase.